The following is a 425-amino-acid chain: Polyribonucleotide 5'-hydroxyl-kinase Clp1 (425 aa).

ATP-binding positions include Glu22, Lys62, and 124-129; that span reads DVGKST.

The protein belongs to the Clp1 family. Clp1 subfamily. In terms of assembly, component of the tRNA splicing endonuclease complex. Component of pre-mRNA cleavage complex II (CF-II).

The protein localises to the nucleus. It carries out the reaction a 5'-end dephospho-2'-deoxyribonucleoside-DNA + ATP = a 5'-end 5'-phospho-2'-deoxyribonucleoside-DNA + ADP + H(+). The catalysed reaction is a 5'-end dephospho-ribonucleoside-RNA + ATP = a 5'-end 5'-phospho-ribonucleoside-RNA + ADP + H(+). Functionally, polynucleotide kinase that can phosphorylate the 5'-hydroxyl groups of double-stranded RNA (dsRNA), single-stranded RNA (ssRNA), double stranded DNA (dsDNA) and double-stranded DNA:RNA hybrids. dsRNA is phosphorylated more efficiently than dsDNA, and the RNA component of a DNA:RNA hybrid is phosphorylated more efficiently than the DNA component. Plays a role in both tRNA splicing and mRNA 3'-end formation. Component of the tRNA splicing endonuclease complex: phosphorylates the 5'-terminus of the tRNA 3'-exon during tRNA splicing; this phosphorylation event is a prerequisite for the subsequent ligation of the two exon halves and the production of a mature tRNA. Its role in tRNA splicing and maturation is required for cerebellar development. Component of the pre-mRNA cleavage complex II (CF-II), which seems to be required for mRNA 3'-end formation. Also phosphorylates the 5'-terminus of exogenously introduced short interfering RNAs (siRNAs), which is a necessary prerequisite for their incorporation into the RNA-induced silencing complex (RISC). However, endogenous siRNAs and microRNAs (miRNAs) that are produced by the cleavage of dsRNA precursors by dicer1 already contain a 5'-phosphate group, so this protein may be dispensible for normal RNA-mediated gene silencing. The sequence is that of Polyribonucleotide 5'-hydroxyl-kinase Clp1 from Gallus gallus (Chicken).